Reading from the N-terminus, the 380-residue chain is Cytochrome b (380 aa).

4 consecutive transmembrane segments (helical) span residues 34 to 54 (FGSL…LLAM), 78 to 99 (WLIR…YLHI), 114 to 134 (WNTG…GYVL), and 179 to 199 (FFAL…IHLT). Positions 84 and 98 each coordinate heme b. Positions 183 and 197 each coordinate heme b. Position 202 (histidine 202) interacts with a ubiquinone. Transmembrane regions (helical) follow at residues 227–247 (TKDL…ALFS), 289–309 (LGGV…PFLH), 321–341 (LSQI…WVGS), and 348–368 (FIII…ILFP).

This sequence belongs to the cytochrome b family. In terms of assembly, the cytochrome bc1 complex contains 11 subunits: 3 respiratory subunits (MT-CYB, CYC1 and UQCRFS1), 2 core proteins (UQCRC1 and UQCRC2) and 6 low-molecular weight proteins (UQCRH/QCR6, UQCRB/QCR7, UQCRQ/QCR8, UQCR10/QCR9, UQCR11/QCR10 and a cleavage product of UQCRFS1). This cytochrome bc1 complex then forms a dimer. Heme b is required as a cofactor.

The protein localises to the mitochondrion inner membrane. Component of the ubiquinol-cytochrome c reductase complex (complex III or cytochrome b-c1 complex) that is part of the mitochondrial respiratory chain. The b-c1 complex mediates electron transfer from ubiquinol to cytochrome c. Contributes to the generation of a proton gradient across the mitochondrial membrane that is then used for ATP synthesis. The polypeptide is Cytochrome b (MT-CYB) (Aerodramus vulcanorum (Volcano swiftlet)).